We begin with the raw amino-acid sequence, 250 residues long: tRNA (guanine-N(7)-)-methyltransferase (250 aa).

The segment covering 1-10 (MTPDDPRDAS) has biased composition (basic and acidic residues). The interval 1 to 30 (MTPDDPRDASDASLADATADSASRGHGSFF) is disordered. A compositionally biased stretch (low complexity) spans 11–24 (DASLADATADSASR). Residues Glu79, Glu104, Asp131, and Asp153 each coordinate S-adenosyl-L-methionine. Asp153 is an active-site residue. Positions 157 and 189 each coordinate substrate.

Belongs to the class I-like SAM-binding methyltransferase superfamily. TrmB family.

The enzyme catalyses guanosine(46) in tRNA + S-adenosyl-L-methionine = N(7)-methylguanosine(46) in tRNA + S-adenosyl-L-homocysteine. It participates in tRNA modification; N(7)-methylguanine-tRNA biosynthesis. Functionally, catalyzes the formation of N(7)-methylguanine at position 46 (m7G46) in tRNA. The chain is tRNA (guanine-N(7)-)-methyltransferase from Rhodopseudomonas palustris (strain BisA53).